The chain runs to 142 residues: Large ribosomal subunit protein uL13 (142 aa).

Belongs to the universal ribosomal protein uL13 family. Part of the 50S ribosomal subunit.

This protein is one of the early assembly proteins of the 50S ribosomal subunit, although it is not seen to bind rRNA by itself. It is important during the early stages of 50S assembly. The polypeptide is Large ribosomal subunit protein uL13 (Saccharophagus degradans (strain 2-40 / ATCC 43961 / DSM 17024)).